Reading from the N-terminus, the 449-residue chain is Ribosomal protein uS12 methylthiotransferase RimO (449 aa).

Residues 15-125 (PRISFVSLGC…VLAAVHEAVP (111 aa)) form the MTTase N-terminal domain. Residues Cys24, Cys60, Cys89, Cys156, Cys160, and Cys163 each contribute to the [4Fe-4S] cluster site. Residues 142-379 (LTPRHYAYLK…MRTQQKVSAR (238 aa)) form the Radical SAM core domain. Residues 382 to 448 (KRKVGTRQSV…PYDLSGTAVG (67 aa)) enclose the TRAM domain.

Belongs to the methylthiotransferase family. RimO subfamily. It depends on [4Fe-4S] cluster as a cofactor.

It is found in the cytoplasm. The enzyme catalyses L-aspartate(89)-[ribosomal protein uS12]-hydrogen + (sulfur carrier)-SH + AH2 + 2 S-adenosyl-L-methionine = 3-methylsulfanyl-L-aspartate(89)-[ribosomal protein uS12]-hydrogen + (sulfur carrier)-H + 5'-deoxyadenosine + L-methionine + A + S-adenosyl-L-homocysteine + 2 H(+). In terms of biological role, catalyzes the methylthiolation of an aspartic acid residue of ribosomal protein uS12. The chain is Ribosomal protein uS12 methylthiotransferase RimO from Xanthobacter autotrophicus (strain ATCC BAA-1158 / Py2).